The primary structure comprises 741 residues: NUT family member 2G (741 aa).

5 disordered regions span residues 172–200 (PGNA…PDDS), 293–375 (IQKS…PEEI), 391–424 (LGSH…SDPG), 496–624 (RAAP…LPGM), and 638–741 (RLSQ…HCSQ). Residues 304 to 321 (SLPPPAPPRLEPRGPPAP) show a composition bias toward pro residues. Residues 402–412 (EGQREKGKVEQ) show a composition bias toward basic and acidic residues. Over residues 528 to 545 (QRVSVETSPPQTAAQDPQ) the composition is skewed to polar residues. Positions 639–650 (LSQSPVPSSGLL) are enriched in low complexity. Over residues 731 to 741 (SRRKKKRHCSQ) the composition is skewed to basic residues.

It belongs to the NUT family.

In Homo sapiens (Human), this protein is NUT family member 2G (NUTM2G).